Consider the following 296-residue polypeptide: Acetyl-coenzyme A carboxylase carboxyl transferase subunit beta (296 aa).

A CoA carboxyltransferase N-terminal domain is found at 25–294 (VWTKCTSCEQ…PFVEPELISE (270 aa)). Zn(2+) contacts are provided by C29, C32, C48, and C51. The C4-type zinc-finger motif lies at 29–51 (CTSCEQVLYSEELKRNLYVCPKC).

Belongs to the AccD/PCCB family. As to quaternary structure, acetyl-CoA carboxylase is a heterohexamer composed of biotin carboxyl carrier protein (AccB), biotin carboxylase (AccC) and two subunits each of ACCase subunit alpha (AccA) and ACCase subunit beta (AccD). Requires Zn(2+) as cofactor.

It localises to the cytoplasm. It catalyses the reaction N(6)-carboxybiotinyl-L-lysyl-[protein] + acetyl-CoA = N(6)-biotinyl-L-lysyl-[protein] + malonyl-CoA. It participates in lipid metabolism; malonyl-CoA biosynthesis; malonyl-CoA from acetyl-CoA: step 1/1. Its function is as follows. Component of the acetyl coenzyme A carboxylase (ACC) complex. Biotin carboxylase (BC) catalyzes the carboxylation of biotin on its carrier protein (BCCP) and then the CO(2) group is transferred by the transcarboxylase to acetyl-CoA to form malonyl-CoA. This Haemophilus influenzae (strain PittEE) protein is Acetyl-coenzyme A carboxylase carboxyl transferase subunit beta.